The chain runs to 2144 residues: Alpha-protein kinase 2 (2144 aa).

One can recognise an Ig-like 1 domain in the interval 7 to 105 (PERRTLCFLS…ICCSASLEVQ (99 aa)). A disulfide bond links Cys-33 and Cys-98. Disordered regions lie at residues 425 to 473 (ETAK…LQTM), 500 to 575 (SLAR…GAPG), 727 to 775 (EDNE…NVGS), 845 to 864 (QTQG…DGKS), 881 to 907 (EASE…TLPY), 1011 to 1065 (SCEA…PEGQ), 1316 to 1340 (DPVE…EMEM), 1471 to 1509 (GPGE…ETEV), 1565 to 1587 (CGNH…PKGN), 1629 to 1696 (ECES…GSGH), and 1720 to 1754 (ENSR…PCKA). Residues 500 to 511 (SLARERTDEKYP) are compositionally biased toward basic and acidic residues. Positions 853–864 (RSTDKRSQDGKS) are enriched in basic and acidic residues. Residues 897–906 (PPSTFSSTLP) are compositionally biased toward polar residues. Residues 1574–1587 (DLTNTPCTSSPKGN) show a composition bias toward polar residues. 2 stretches are compositionally biased toward basic and acidic residues: residues 1631 to 1645 (ESEK…RDPC) and 1732 to 1754 (PKFE…PCKA). The Ig-like 2 domain occupies 1759–1847 (PVLLKRIQAE…GKVTAEFNLT (89 aa)). An intrachain disulfide couples Cys-1781 to Cys-1831. The region spanning 1874-2106 (KEDVFNDSYF…YCKMLGLKSL (233 aa)) is the Alpha-type protein kinase domain. Residues 2109–2144 (NSQKPKKPIVGKGRVPTNATQVKTPESETPPAERKT) are disordered.

The protein belongs to the protein kinase superfamily. Alpha-type protein kinase family. ALPK subfamily.

The protein resides in the basolateral cell membrane. The catalysed reaction is L-seryl-[protein] + ATP = O-phospho-L-seryl-[protein] + ADP + H(+). The enzyme catalyses L-threonyl-[protein] + ATP = O-phospho-L-threonyl-[protein] + ADP + H(+). Functionally, protein kinase that recognizes phosphorylation sites in which the surrounding peptides have an alpha-helical conformation. Regulates cardiac development and cardiomyocyte differentiation by negatively regulating Wnt/beta-catenin signaling. The polypeptide is Alpha-protein kinase 2 (Mus musculus (Mouse)).